A 224-amino-acid polypeptide reads, in one-letter code: Ribose-5-phosphate isomerase A (224 aa).

Substrate-binding positions include 34 to 37 (TGST), 87 to 90 (DGAD), and 100 to 103 (KGGG). The active-site Proton acceptor is glutamate 109. Lysine 127 serves as a coordination point for substrate.

This sequence belongs to the ribose 5-phosphate isomerase family. In terms of assembly, homodimer.

The enzyme catalyses aldehydo-D-ribose 5-phosphate = D-ribulose 5-phosphate. Its pathway is carbohydrate degradation; pentose phosphate pathway; D-ribose 5-phosphate from D-ribulose 5-phosphate (non-oxidative stage): step 1/1. Catalyzes the reversible conversion of ribose-5-phosphate to ribulose 5-phosphate. In Francisella tularensis subsp. novicida (strain U112), this protein is Ribose-5-phosphate isomerase A.